We begin with the raw amino-acid sequence, 481 residues long: Protein FIZZY-RELATED 3 (481 aa).

Residues 100 to 165 (PAGGQGSASS…RKVPKTPHKV (66 aa)) form a disordered region. The segment covering 125-136 (SNSSPSSPFSPS) has biased composition (low complexity). Over residues 154-163 (PPRKVPKTPH) the composition is skewed to basic residues. WD repeat units follow at residues 172-209 (QDDF…VTKL), 213-252 (GPND…RVRT), 255-292 (GHQT…DFVS), 296-335 (GHKS…PILK), 338-380 (EHTA…QLNS), 382-423 (DTGS…KVAT), and 426-465 (GHSM…KMQT).

Belongs to the WD repeat CDC20/Fizzy family. In terms of assembly, associates with the APC/C complex. Interacts with CDC20-1, CDC20-2, CYCA1-1, CYCA3-4, CYCB1-1 and CYCB1-2. Binds to GIG1 and PYM.

Its pathway is protein modification; protein ubiquitination. Its function is as follows. Activator protein that regulates the ubiquitin ligase activity and substrate specificity of the anaphase promoting complex/cyclosome (APC/C). The polypeptide is Protein FIZZY-RELATED 3 (FZR3) (Arabidopsis thaliana (Mouse-ear cress)).